The following is a 1003-amino-acid chain: MTIRLNKVTRDLNVGITTVVEFLQKKGYTIEASPNAKITEEQYAVLVKEFSTDKNLKIESEKFSQERQNKDRNKASISIEGFESKKEKEEVVKTVIPEEARPKLKQVGKIDLDNLNKKTAPKVVEPAAKVIEQTPKAEPVVEKVVERKETPQPEKETPKPVVVEEKKPEPAPQPAPAPVLEEKKEPKIEKTEEKTPQVKEMEKETPEAAPVQEKEEDDVFKIRPTEFKSKINVVGQIDLAALNQSTRPKKKSKEEKRKEREEKDKQRQEQRKLMKDAIIKEIRKGDDKISKNSVNDDAAKKKKRNRINKERVDINAAGTTNAGGASNNNQRNDNANRPNRNNNSKPNGNNNQGGGKFNKDRFKKPVVKAEVSDEDVAKQVKETLARLTNKTKNKAAKYRKEKRENVQNRLMEQEEMEQEDSKILKLTEFVTANELASMMDIPVTQVIATCMSIGIMVSINQRLDAETINLVAEEFGYKTEYVSAEVAQAITEEEDNEEDLQPRAPIVTVMGHVDHGKTSLLDYIRKANVIAGEAGGITQHIGAYNVKLEDGRHITFLDTPGHEAFTAMRARGAKVTDIAIIIVAADDNVMPQTKEAINHAMAAGVPIVFAINKVDKPHANPDKIKEELAAMNFLVEEWGGKYQSQDISAKKGTGVHDLLEKVLLEAEMLDLKANPDRKATGSIIESSLDKGRGYVATMLVANGTLKMGDIVLAGTSYGKVKAMFNERNQRIKEAGPSEPVLILGLNGAPAAGDTFHVIDTEQEARDIANKREQLQREQGLRTQKLLTLDEVGRRLALGDFHELNVIVKGDVDGSVEALSDSLIKLSTEQVQVNVIHKGVGQISESDVTLAAASDAIIVGFQVRPSSSAGKLAEQEGVDIRKYSVIYDAIEEVKAAMEGMLAPTLKEQITATIEVREVFNITKVGLVAGAMVKTGKVKRSDKARLIRDGIVVFTGAINALKRFKDDVKEVGTNFECGISLTNCNDIKVGDIIEAYEEVEVKQTL.

Composition is skewed to basic and acidic residues over residues 61 to 74, 139 to 169, 180 to 206, 219 to 229, and 252 to 290; these read EKFS…DRNK, PVVE…KKPE, LEEK…KETP, VFKIRPTEFKS, and SKEE…DKIS. 2 disordered regions span residues 61 to 81 and 135 to 362; these read EKFS…SIEG and PKAE…KDRF. Residues 315-350 are compositionally biased toward low complexity; the sequence is NAAGTTNAGGASNNNQRNDNANRPNRNNNSKPNGNN. The tr-type G domain maps to 502–672; sequence PRAPIVTVMG…LLEAEMLDLK (171 aa). The segment at 511–518 is G1; that stretch reads GHVDHGKT. 511-518 is a binding site for GTP; that stretch reads GHVDHGKT. The interval 536–540 is G2; it reads GITQH. Residues 558-561 form a G3 region; sequence DTPG. Residues 558–562 and 612–615 contribute to the GTP site; these read DTPGH and NKVD. Residues 612-615 are G4; it reads NKVD. The tract at residues 648–650 is G5; that stretch reads SAK.

This sequence belongs to the TRAFAC class translation factor GTPase superfamily. Classic translation factor GTPase family. IF-2 subfamily.

Its subcellular location is the cytoplasm. Its function is as follows. One of the essential components for the initiation of protein synthesis. Protects formylmethionyl-tRNA from spontaneous hydrolysis and promotes its binding to the 30S ribosomal subunits. Also involved in the hydrolysis of GTP during the formation of the 70S ribosomal complex. The protein is Translation initiation factor IF-2 of Phocaeicola vulgatus (strain ATCC 8482 / DSM 1447 / JCM 5826 / CCUG 4940 / NBRC 14291 / NCTC 11154) (Bacteroides vulgatus).